The primary structure comprises 118 residues: MTHLHITTWVVALILLFVSYSLYSSGSAKGAKITHMILRLFYILIILTGAELFVRFANWNGEYAGKMILGIITIGLMEMLLIRKKKEKSTGGLWVGFVIVLLLTVLLGLHLPIGFQLF.

4 helical membrane-spanning segments follow: residues 4–24, 33–53, 62–82, and 93–113; these read LHITTWVVALILLFVSYSLYS, ITHMILRLFYILIILTGAELF, EYAGKMILGIITIGLMEMLLI, and LWVGFVIVLLLTVLLGLHLPI.

Belongs to the UPF0344 family.

It is found in the cell membrane. The sequence is that of UPF0344 protein YisL (yisL) from Bacillus subtilis (strain 168).